The chain runs to 443 residues: Putative F-box/FBD/LRR-repeat protein At5g22670 (443 aa).

The region spanning 10–56 (QDSISLLPDDLLCRILSNLPTKVAVRTSVLSKRWKRFSLSVPLLEFN) is the F-box domain. LRR repeat units lie at residues 139–165 (SLRL…HLID), 166–191 (NIYP…NVSR), 219–243 (YGDI…SLRD), 275–300 (NFLL…TMSG), and 325–353 (YAVF…VLEL). In terms of domain architecture, FBD spans 361–412 (LLILSSSIPKCLRSSLEHVEIHTPISGAEAEMKLVKYFLENSAVLKKFTLQL).

This is Putative F-box/FBD/LRR-repeat protein At5g22670 from Arabidopsis thaliana (Mouse-ear cress).